The sequence spans 342 residues: MKVLGIETSCDETGVAIFDTAAGLLGHCVHTQIALHAAYGGVVPELASRDHIRRLPLLVKQTLDAAGCELSQLDAIAYTAGPGLAGALLVGASFAESLGLALAVPVLPIHHLEGHLLSPLLAADPPAFPFVALLVSGGHTQLMRVTGVGEYALLGESVDDAAGEAFDKTAKLLGLGYPGGPQLAALAERGQTGRFRLPRPMLRSGDLDFSFSGLKTAVLNVVSAPTWRAEDVADLAADFQAAVVEVLCAKALRALEQTGLARLVVAGGVGANRHLRERLDASTRRKGCRVYYPEPELCTDNGAMIAFAGALRAAAGQRGGETPAVRVFPRWPLAELHSPVQP.

Fe cation is bound by residues His111 and His115. Substrate-binding positions include 134–138 (LVSGG), Asp167, Gly180, and Asn272. Asp300 provides a ligand contact to Fe cation.

It belongs to the KAE1 / TsaD family. Fe(2+) is required as a cofactor.

Its subcellular location is the cytoplasm. It catalyses the reaction L-threonylcarbamoyladenylate + adenosine(37) in tRNA = N(6)-L-threonylcarbamoyladenosine(37) in tRNA + AMP + H(+). In terms of biological role, required for the formation of a threonylcarbamoyl group on adenosine at position 37 (t(6)A37) in tRNAs that read codons beginning with adenine. Is involved in the transfer of the threonylcarbamoyl moiety of threonylcarbamoyl-AMP (TC-AMP) to the N6 group of A37, together with TsaE and TsaB. TsaD likely plays a direct catalytic role in this reaction. This is tRNA N6-adenosine threonylcarbamoyltransferase from Aromatoleum aromaticum (strain DSM 19018 / LMG 30748 / EbN1) (Azoarcus sp. (strain EbN1)).